Reading from the N-terminus, the 162-residue chain is Putative ankyrin repeat protein R664 (162 aa).

ANK repeat units lie at residues 10–40, 47–78, and 82–111; these read KKLV…NVNY, NDTP…DVNY, and YHET…NPYL.

The protein is Putative ankyrin repeat protein R664 of Acanthamoeba polyphaga mimivirus (APMV).